Here is a 117-residue protein sequence, read N- to C-terminus: uncharacterized protein (117 aa).

The first 20 residues, 1–20, serve as a signal peptide directing secretion; it reads MAAVHLYIISFTALMISSTS.

This is an uncharacterized protein from Saccharomyces cerevisiae (strain ATCC 204508 / S288c) (Baker's yeast).